Consider the following 1288-residue polypeptide: Mitogen-activated protein kinase kinase kinase 6 (1288 aa).

A Protein kinase domain is found at 648 to 906; sequence TGERLVLGKG…AQTLLGDPFL (259 aa). ATP is bound by residues 654–662 and Lys677; that span reads LGKGTYGVV. The active-site Proton acceptor is Asp771. Thr806 is modified (phosphothreonine). Positions 899-997 are disordered; it reads TLLGDPFLQP…SSGLSLLHQE (99 aa). The span at 914–952 shows a compositional bias: low complexity; it reads SPSSPRHAPRPSDAPSASPTPSANSTTQSQTFPCPQAPS. Ser964 and Ser984 each carry phosphoserine. The segment covering 980–989 has biased composition (low complexity); sequence EEPASPEESS. Positions 1004 to 1029 form a coiled coil; sequence LAAVLEQELPALAENLHQEQKQEQGA. The span at 1123 to 1134 shows a compositional bias: basic and acidic residues; it reads VEKEAVSPRSEE. A disordered region spans residues 1123–1157; the sequence is VEKEAVSPRSEELSNEGDSQQSPGQQSPLPVEPEQ. Phosphoserine is present on residues Ser1129 and Ser1149. Over residues 1141–1151 the composition is skewed to low complexity; sequence SQQSPGQQSPL. Positions 1166–1205 form a coiled coil; that stretch reads LSLLRAETDRLREILAGKEREYQALVQRALQRLNEEARTY.

Belongs to the protein kinase superfamily. STE Ser/Thr protein kinase family. MAP kinase kinase kinase subfamily. In terms of assembly, binds both upstream activators and downstream substrates in multimolecular complexes. Mg(2+) is required as a cofactor.

The enzyme catalyses L-seryl-[protein] + ATP = O-phospho-L-seryl-[protein] + ADP + H(+). The catalysed reaction is L-threonyl-[protein] + ATP = O-phospho-L-threonyl-[protein] + ADP + H(+). Activated by phosphorylation on Thr-806. Catalytically active only when complexed with MAP3K5, with MAP3K5 supporting the stability and the active configuration of MAP3K6 and MAP3K6 activating MAP3K5 by direct phosphorylation. In terms of biological role, component of a protein kinase signal transduction cascade. Activates the JNK, but not ERK or p38 kinase pathways. The sequence is that of Mitogen-activated protein kinase kinase kinase 6 (MAP3K6) from Homo sapiens (Human).